The following is a 915-amino-acid chain: Probable inorganic carbon transporter subunit DabA (915 aa).

Cysteine 392, aspartate 394, histidine 566, and cysteine 581 together coordinate Zn(2+).

Belongs to the inorganic carbon transporter (TC 9.A.2) DabA family. As to quaternary structure, forms a complex with DabB. Zn(2+) serves as cofactor.

It is found in the cell inner membrane. In terms of biological role, part of an energy-coupled inorganic carbon pump. The sequence is that of Probable inorganic carbon transporter subunit DabA from Nitrosospira multiformis (strain ATCC 25196 / NCIMB 11849 / C 71).